Reading from the N-terminus, the 1019-residue chain is Serine/threonine-protein kinase 31 (1019 aa).

Positions 78–137 constitute a Tudor domain; it reads NLDPNKIYGGLFSEDQCWYRCKVLKIISVEKCLVRYIDYGNTEILNRSDIVEIPLELQFS. Positions 298-355 form a coiled coil; that stretch reads EKIKQDQKLIEENEKLKTEKDALLESYKALELKVEQIAQELQQEKAAAVDLTNHLEYT. The 310-residue stretch at 710–1019 folds into the Protein kinase domain; it reads IGLLKYMNSG…TRNGEANFDC (310 aa). Residues 716–724 and Lys737 contribute to the ATP site; that span reads MNSGGLLTM.

This sequence belongs to the protein kinase superfamily. Ser/Thr protein kinase family. In terms of tissue distribution, testis specific.

It catalyses the reaction L-seryl-[protein] + ATP = O-phospho-L-seryl-[protein] + ADP + H(+). The enzyme catalyses L-threonyl-[protein] + ATP = O-phospho-L-threonyl-[protein] + ADP + H(+). This is Serine/threonine-protein kinase 31 (STK31) from Homo sapiens (Human).